A 473-amino-acid chain; its full sequence is Aspartyl/glutamyl-tRNA(Asn/Gln) amidotransferase subunit B (473 aa).

Belongs to the GatB/GatE family. GatB subfamily. As to quaternary structure, heterotrimer of A, B and C subunits.

It carries out the reaction L-glutamyl-tRNA(Gln) + L-glutamine + ATP + H2O = L-glutaminyl-tRNA(Gln) + L-glutamate + ADP + phosphate + H(+). The enzyme catalyses L-aspartyl-tRNA(Asn) + L-glutamine + ATP + H2O = L-asparaginyl-tRNA(Asn) + L-glutamate + ADP + phosphate + 2 H(+). Its function is as follows. Allows the formation of correctly charged Asn-tRNA(Asn) or Gln-tRNA(Gln) through the transamidation of misacylated Asp-tRNA(Asn) or Glu-tRNA(Gln) in organisms which lack either or both of asparaginyl-tRNA or glutaminyl-tRNA synthetases. The reaction takes place in the presence of glutamine and ATP through an activated phospho-Asp-tRNA(Asn) or phospho-Glu-tRNA(Gln). This is Aspartyl/glutamyl-tRNA(Asn/Gln) amidotransferase subunit B from Sulfurisphaera tokodaii (strain DSM 16993 / JCM 10545 / NBRC 100140 / 7) (Sulfolobus tokodaii).